The primary structure comprises 94 residues: PqqA binding protein (94 aa).

It belongs to the PqqD family. In terms of assembly, monomer. Interacts with PqqE.

Its pathway is cofactor biosynthesis; pyrroloquinoline quinone biosynthesis. Functions as a PqqA binding protein and presents PqqA to PqqE, in the pyrroloquinoline quinone (PQQ) biosynthetic pathway. This Pseudomonas syringae pv. syringae (strain B728a) protein is PqqA binding protein.